The primary structure comprises 348 residues: Alcohol dehydrogenase 2 (348 aa).

Residues Cys44, His67, Cys98, Cys101, Cys104, Cys112, and Cys154 each coordinate Zn(2+). Residues 178-184 (GAAGGLG), Asp202, Lys207, 269-271 (VGL), and Arg341 contribute to the NAD(+) site.

Belongs to the zinc-containing alcohol dehydrogenase family. As to quaternary structure, homotetramer. It depends on Zn(2+) as a cofactor.

The protein resides in the cytoplasm. It catalyses the reaction a primary alcohol + NAD(+) = an aldehyde + NADH + H(+). The catalysed reaction is a secondary alcohol + NAD(+) = a ketone + NADH + H(+). This chain is Alcohol dehydrogenase 2 (ADH2), found in Candida albicans (strain SC5314 / ATCC MYA-2876) (Yeast).